A 242-amino-acid chain; its full sequence is ATP-dependent dethiobiotin synthetase BioD (242 aa).

Residue 12-17 (EVGKTV) participates in ATP binding. A Mg(2+)-binding site is contributed by T16. Residue K37 is part of the active site. A substrate-binding site is contributed by S41. ATP-binding positions include D51 and 112 to 115 (EGAG). Mg(2+) contacts are provided by D51 and E112.

The protein belongs to the dethiobiotin synthetase family. Homodimer. Requires Mg(2+) as cofactor.

The protein localises to the cytoplasm. The enzyme catalyses (7R,8S)-7,8-diammoniononanoate + CO2 + ATP = (4R,5S)-dethiobiotin + ADP + phosphate + 3 H(+). The protein operates within cofactor biosynthesis; biotin biosynthesis; biotin from 7,8-diaminononanoate: step 1/2. Catalyzes a mechanistically unusual reaction, the ATP-dependent insertion of CO2 between the N7 and N8 nitrogen atoms of 7,8-diaminopelargonic acid (DAPA, also called 7,8-diammoniononanoate) to form a ureido ring. This Bacillus cereus (strain ATCC 14579 / DSM 31 / CCUG 7414 / JCM 2152 / NBRC 15305 / NCIMB 9373 / NCTC 2599 / NRRL B-3711) protein is ATP-dependent dethiobiotin synthetase BioD.